The primary structure comprises 384 residues: Histone acetyltransferase type B subunit 2 (384 aa).

WD repeat units follow at residues 156–196 (GHSA…SSIS), 203–243 (RHET…CIHA), 247–287 (AHTS…QPLH), 291–331 (GHSK…AEVP), and 348–384 (GHTS…PQPE).

The protein belongs to the WD repeat RBAP46/RBAP48/MSI1 family. As to quaternary structure, component of the HAT-B complex.

Its subcellular location is the cytoplasm. It is found in the nucleus. Regulatory subunit of the histone acetylase B (HAT-B) complex. The complex acetylates histone H4 which is required for telomeric silencing. The sequence is that of Histone acetyltransferase type B subunit 2 (HAT2) from Encephalitozoon cuniculi (strain GB-M1) (Microsporidian parasite).